Here is a 515-residue protein sequence, read N- to C-terminus: MAGGFSVSGSGVEFEAKITPIVIISCIMAATGGLMFGYDVGISGGVTSMDDFLREFFPTVLKKKHEDKESNYCKYDNQGLQLFTSSLYLAGLTATFFASYTTRRLGRRLTMLIAGVFFIVGVIFNGAAQNLAMLIVGRILLGCGVGFANQAVPLFLSEIAPTRIRGGLNILFQLNVTIGILFANLVNYGTAKIHPWGWRLSLSLAGIPAALLTLGALFVVDTPNSLIERGRLEEGKAVLRKIRGTDNVEPEFNEIVEASRVAQEVKHPFRNLLQRRNRPQLVIAVLLQIFQQFTGINAIMFYAPVLFNTLGFKTDASLYSAVITGAVNVLSTLVSVYSVDRVGRRMLLLEAGVQMFLSQVAIAVVLGIKVTDRSDNLGHGWAIMVVVMVCTFVSSFAWSWGPLGWLIPSETFPLETRSAGQSVTVCVNLLFTFVIAQAFLSMLCHLKYAIFAFFSAWVVVMSLFVLFFLPETKNIPIEEMTERVWKQHWFWKRFMDDADKHHVVPNGGKSNGATV.

Topologically, residues 1-17 (MAGGFSVSGSGVEFEAK) are cytoplasmic. Residues 18–38 (ITPIVIISCIMAATGGLMFGY) traverse the membrane as a helical segment. Residues 39–78 (DVGISGGVTSMDDFLREFFPTVLKKKHEDKESNYCKYDNQ) are Extracellular-facing. Residues 79-99 (GLQLFTSSLYLAGLTATFFAS) form a helical membrane-spanning segment. Over 100 to 108 (YTTRRLGRR) the chain is Cytoplasmic. A helical membrane pass occupies residues 109–129 (LTMLIAGVFFIVGVIFNGAAQ). Residues 130 to 138 (NLAMLIVGR) lie on the Extracellular side of the membrane. The chain crosses the membrane as a helical span at residues 139 to 159 (ILLGCGVGFANQAVPLFLSEI). Over 160-165 (APTRIR) the chain is Cytoplasmic. The helical transmembrane segment at 166-186 (GGLNILFQLNVTIGILFANLV) threads the bilayer. Residues 187–199 (NYGTAKIHPWGWR) are Extracellular-facing. The chain crosses the membrane as a helical span at residues 200 to 220 (LSLSLAGIPAALLTLGALFVV). Over 221–280 (DTPNSLIERGRLEEGKAVLRKIRGTDNVEPEFNEIVEASRVAQEVKHPFRNLLQRRNRPQ) the chain is Cytoplasmic. Residues 281-301 (LVIAVLLQIFQQFTGINAIMF) traverse the membrane as a helical segment. Residues 302–315 (YAPVLFNTLGFKTD) are Extracellular-facing. The chain crosses the membrane as a helical span at residues 316–336 (ASLYSAVITGAVNVLSTLVSV). The Cytoplasmic portion of the chain corresponds to 337-347 (YSVDRVGRRML). The chain crosses the membrane as a helical span at residues 348–368 (LLEAGVQMFLSQVAIAVVLGI). The Extracellular portion of the chain corresponds to 369-379 (KVTDRSDNLGH). The chain crosses the membrane as a helical span at residues 380-400 (GWAIMVVVMVCTFVSSFAWSW). Residues 401 to 422 (GPLGWLIPSETFPLETRSAGQS) lie on the Cytoplasmic side of the membrane. Residues 423–443 (VTVCVNLLFTFVIAQAFLSML) form a helical membrane-spanning segment. Over 444–448 (CHLKY) the chain is Extracellular. Residues 449-469 (AIFAFFSAWVVVMSLFVLFFL) form a helical membrane-spanning segment. The Cytoplasmic portion of the chain corresponds to 470–515 (PETKNIPIEEMTERVWKQHWFWKRFMDDADKHHVVPNGGKSNGATV).

It belongs to the major facilitator superfamily. Sugar transporter (TC 2.A.1.1) family. In terms of tissue distribution, expressed in roots, shoots, leaf blades, leaf sheaths, anthers, ovaries and embryos.

It is found in the membrane. In terms of biological role, mediates active uptake of hexoses by sugar:proton symport. Can transport glucose, fructose, mannose and galactose. Can transport xylose and ribose. The chain is Sugar transport protein MST4 from Oryza sativa subsp. japonica (Rice).